The chain runs to 306 residues: tRNA dimethylallyltransferase (306 aa).

Gly11 to Ser18 contributes to the ATP binding site. A substrate-binding site is contributed by Thr13–Ser18. Positions Asp35–Gln38 are interaction with substrate tRNA.

It belongs to the IPP transferase family. As to quaternary structure, monomer. It depends on Mg(2+) as a cofactor.

It carries out the reaction adenosine(37) in tRNA + dimethylallyl diphosphate = N(6)-dimethylallyladenosine(37) in tRNA + diphosphate. Functionally, catalyzes the transfer of a dimethylallyl group onto the adenine at position 37 in tRNAs that read codons beginning with uridine, leading to the formation of N6-(dimethylallyl)adenosine (i(6)A). The sequence is that of tRNA dimethylallyltransferase from Borreliella burgdorferi (strain ZS7) (Borrelia burgdorferi).